Reading from the N-terminus, the 229-residue chain is MLSGLIQRFEEEKMKHNQERVEELSLVRVDDTISQPPRYAPSAPMPSSMPTVALEILDKAMSNTTGATQTQKAEKAAFASYAEAFRDDVRLRQINRHVNEQIFPKLKSDLGGLKKKRAIIHMTLLVAAVVALLTSVCTLSSDMSVAFKLNGTSAEIPQWFKSLNPMLGVVNLGATFIMMVCAKSERGLNQQIDMIKKEVMKKQSYNDAVRMSFTEFSSVPLDGFELPLT.

The next 2 helical transmembrane spans lie at 119–139 (IIHM…VCTL) and 162–182 (SLNP…MVCA).

Belongs to the orbivirus NS3 family. In terms of assembly, forms homooligomers via coiled-coil motif. Interacts with host OPTN; this interaction inhibits innate immune response.

The protein resides in the host cell membrane. The protein localises to the host Golgi apparatus. In terms of biological role, plays a role in the inhibition of host innate immune response. Interacts with host OPTN and thus inhibits the recruitment of TBK1 to the host Golgi apparatus. In turn, downstream partner IRF3 cannot be activated and IFN-beta production is impaired. Facilitates viral particle release either by increasing plasma membrane permeability through a viroporin-like activity or by viral budding. This is Non-structural protein P8 (Segment-10) from Bluetongue virus 1 (isolate Australia) (BTV 1).